The primary structure comprises 694 residues: MADSLLLLKRVPSRHTWLRARKARPQLMLSRRPRRRLRNLRWRSRRRLRRRLLQAQAAGADWLQGGCLVSGDAALQRLKTSARRRASSPEPAEDPVPSGPAILPIPPVRPAGSGRAVLLLPLGQGFTFSGICCVTCLYGQVQVFGFTISQGQPAQNVFSTYTHSRLTINAVHYSVHEKSKKEMKREARVLLRPYLNQDDRYCLMSSFSPLCSIVLLERLKTSTVNFIISHPGLSYIFVQEVRTFQINSEYFALRSVGIRREKKKTGLRLTESAFAVMEELVSISSEEADSCPVILVCGCQDIGKSTFNRYLINQLLNSVSCVDYLECDLGQTEFTPPGCISLLNITEPVLGPPFTHQRTPQKMVYYGKTSCKNNFENYIEVIKYVFSSYKRESPLIINTMGWVADQGLLLLIDLIRLLSPSHVVQFSSDRSKYMPDLTPDFVDDMDGLYTRRRSRVRNRGFHLPEFAESLEFADEEKEGPVMSTGYKLMFVKSEFVTGKTSRNRESHNRILRELAVLGYLSQLQPPVPKPLRALHGLTPYQVPFNAVALRIIHADVAPTHILYAVNASWVGLCKILDDVRGYASGPILLAQSPICDCVGFGICRGIDMEKKLYHILTPVPPEELRHVNCLLVGAVNIPQCVLKSQGGLEGTIPYVTTDYNFKLPGASEKIGARESGATYKEKGHPKPKFYRKTY.

A2 is modified (N-acetylalanine). Residues R31–R47 carry the Nucleolar localization signal motif. The interval T80–A101 is disordered. G298–S305 lines the ATP pocket. The interval F472–Y694 is interaction with LAS1L. K477 is covalently cross-linked (Glycyl lysine isopeptide (Lys-Gly) (interchain with G-Cter in SUMO2)).

It belongs to the Clp1 family. NOL9/GRC3 subfamily. As to quaternary structure, interacts with PELP1, WDR18 and SENP3. Interacts with LAS1L to form an ITS2 pre-rRNA endonuclease-kinase complex.

The protein localises to the nucleus. Its subcellular location is the nucleolus. It catalyses the reaction a 5'-end dephospho-2'-deoxyribonucleoside-DNA + ATP = a 5'-end 5'-phospho-2'-deoxyribonucleoside-DNA + ADP + H(+). It carries out the reaction a 5'-end dephospho-ribonucleoside-RNA + ATP = a 5'-end 5'-phospho-ribonucleoside-RNA + ADP + H(+). In terms of biological role, polynucleotide kinase that can phosphorylate the 5'-hydroxyl groups of single-stranded and double-stranded RNA and DNA substrates. Involved in rRNA processing and its kinase activity is required for the processing of the 32S precursor into 5.8S and 28S rRNAs, more specifically for the generation of the major 5.8S(S) form. Required for the efficient pre-rRNA processing of internal transcribed spacer 2 (ITS2). Associates with LAS1L to form an ITS2 pre-rRNA endonuclease-kinase complex and is responsible for the transport of this complex into the nucleolus. The chain is Polynucleotide 5'-hydroxyl-kinase NOL9 (NOL9) from Bos taurus (Bovine).